The primary structure comprises 170 residues: ATP synthase subunit b (170 aa).

Residues 11-31 (AFTFGDAFFTLFAFAILLVLI) form a helical membrane-spanning segment.

Belongs to the ATPase B chain family. As to quaternary structure, F-type ATPases have 2 components, F(1) - the catalytic core - and F(0) - the membrane proton channel. F(1) has five subunits: alpha(3), beta(3), gamma(1), delta(1), epsilon(1). F(0) has three main subunits: a(1), b(2) and c(10-14). The alpha and beta chains form an alternating ring which encloses part of the gamma chain. F(1) is attached to F(0) by a central stalk formed by the gamma and epsilon chains, while a peripheral stalk is formed by the delta and b chains.

It localises to the cell membrane. In terms of biological role, f(1)F(0) ATP synthase produces ATP from ADP in the presence of a proton or sodium gradient. F-type ATPases consist of two structural domains, F(1) containing the extramembraneous catalytic core and F(0) containing the membrane proton channel, linked together by a central stalk and a peripheral stalk. During catalysis, ATP synthesis in the catalytic domain of F(1) is coupled via a rotary mechanism of the central stalk subunits to proton translocation. Component of the F(0) channel, it forms part of the peripheral stalk, linking F(1) to F(0). The sequence is that of ATP synthase subunit b from Listeria innocua serovar 6a (strain ATCC BAA-680 / CLIP 11262).